The following is a 138-amino-acid chain: Peptide methionine sulfoxide reductase MsrB (138 aa).

The region spanning 15 to 137 (EAEWRAQLDP…NSASLGFEPR (123 aa)) is the MsrB domain. The Zn(2+) site is built by C54, C57, C103, and C106. Catalysis depends on C126, which acts as the Nucleophile.

It belongs to the MsrB Met sulfoxide reductase family. Requires Zn(2+) as cofactor.

The catalysed reaction is L-methionyl-[protein] + [thioredoxin]-disulfide + H2O = L-methionyl-(R)-S-oxide-[protein] + [thioredoxin]-dithiol. This is Peptide methionine sulfoxide reductase MsrB from Methylibium petroleiphilum (strain ATCC BAA-1232 / LMG 22953 / PM1).